Here is a 565-residue protein sequence, read N- to C-terminus: Beta-hexosaminidase subunit beta (565 aa).

The signal sequence occupies residues 1-13 (MIVLLLLISYCFA). Asn71 is a glycosylation site (N-linked (GlcNAc...) asparagine). Glu347 acts as the Proton donor in catalysis.

The protein belongs to the glycosyl hydrolase 20 family. In terms of assembly, heterodimer of one alpha subunit and one beta subunit. In terms of processing, glycosylated.

It is found in the cytoplasmic granule. Its subcellular location is the secreted. It carries out the reaction Hydrolysis of terminal non-reducing N-acetyl-D-hexosamine residues in N-acetyl-beta-D-hexosaminides.. Functionally, hydrolyzes the non-reducing end N-acetyl-D-hexosamine and/or sulfated N-acetyl-D-hexosamine of glycoconjugates. May contribute to amoebic pathogenicity and may be involved in the destruction of extracellular matrix components. In Entamoeba histolytica (strain ATCC 30459 / HM-1:IMSS / ABRM), this protein is Beta-hexosaminidase subunit beta.